The following is a 369-amino-acid chain: CLIP domain-containing serine protease HP8 (369 aa).

The first 24 residues, 1–24, serve as a signal peptide directing secretion; the sequence is MKTPFEKIRIISCILVIVSTNVVG. A propeptide spanning residues 25-81 is cleaved from the precursor; sequence QKCNGGANCIPLEECTDLFQQLKQGNSPQLTRLLRGLHCGFEDLNSPKICCPPEFLA. The 50-residue stretch at 26–75 folds into the Clip domain; it reads KCNGGANCIPLEECTDLFQQLKQGNSPQLTRLLRGLHCGFEDLNSPKICC. Cystine bridges form between Cys27–Cys74, Cys33–Cys63, Cys39–Cys75, Cys105–Cys239, Cys142–Cys158, Cys186–Cys191, Cys286–Cys303, and Cys313–Cys344. The Peptidase S1 domain maps to 113-368; it reads IFGGIQTEID…FMDWILSKLE (256 aa). His157 acts as the Charge relay system in catalysis. Ca(2+) is bound by residues Glu177, Asn179, Thr182, and Asp185. N-linked (GlcNAc...) asparagine glycosylation occurs at Asn179. Asp219 (charge relay system) is an active-site residue. Ser317 functions as the Charge relay system in the catalytic mechanism.

Belongs to the peptidase S1 family. CLIP subfamily. In terms of assembly, in the active form, heterodimer of a light chain and a heavy chain; disulfide-linked. Post-translationally, proteolytically cleaved for activation. Cleavage produces a light chain and a catalytic heavy chain which remains covalently associated probably through an interchain disulfide bond. In larvae, expressed in the fat body and hemocytes.

Its subcellular location is the secreted. The protein resides in the cytoplasm. Inhibited by (p-amidinophenyl) methanesulfonyl fluoride, p-nitrophenyl-p'-guanidinobenzoate, D-phenylalanyl-L-prolyl-L-arginyl chloromethane, leupeptin, antipain and to a lesser extent by antithrombin III. Functionally, endopeptidase with selective post-Arg cleavage site. Functions in the innate immune response to fungal and Gram-positive bacterial infections. Upon pathogen infection promotes nodulation; a cellular defense response in which hemocytes surround and isolate invading pathogens forming aggregates called nodules. Involved in activating nodule formation in response to infection with M.luteus, E.coli or S.cerevisiae. Able to bind the microbes M.luteus, E.coli or S.cerevisiae. According to another report, does not bind microorganisms. The chain is CLIP domain-containing serine protease HP8 from Bombyx mori (Silk moth).